We begin with the raw amino-acid sequence, 403 residues long: Aspartate aminotransferase, cytoplasmic isozyme 2 (403 aa).

At Met1 the chain carries N-acetylmethionine. Residues Gly37, Trp132, and Asn185 each coordinate L-aspartate. Lys249 carries the N6-(pyridoxal phosphate)lysine modification. Arg377 provides a ligand contact to L-aspartate.

This sequence belongs to the class-I pyridoxal-phosphate-dependent aminotransferase family. Homodimer. Requires pyridoxal 5'-phosphate as cofactor.

The protein localises to the cytoplasm. The enzyme catalyses L-aspartate + 2-oxoglutarate = oxaloacetate + L-glutamate. In terms of biological role, important for the metabolism of amino acids and Krebs-cycle related organic acids. In plants, it is involved in nitrogen metabolism and in aspects of carbon and energy metabolism. The polypeptide is Aspartate aminotransferase, cytoplasmic isozyme 2 (ASP4) (Arabidopsis thaliana (Mouse-ear cress)).